The primary structure comprises 210 residues: Calcium-activated potassium channel subunit beta-4 (210 aa).

Residues 1–19 lie on the Cytoplasmic side of the membrane; it reads MAKLRVSYEYTEAEDKSIR. The chain crosses the membrane as a helical span at residues 20 to 40; sequence LGLFLIVSGILSLFIFGFCWL. Over 41–167 the chain is Extracellular; that stretch reads SPALQDLQAT…DVLLQRTHDE (127 aa). N-linked (GlcNAc...) asparagine glycosylation is found at Asn53 and Asn90. A helical membrane pass occupies residues 168–188; the sequence is IVLLHCFLWPVVAFVVGVLIV. Residues 189 to 210 lie on the Cytoplasmic side of the membrane; that stretch reads VLTICAKSLAVKAEAMKKRKFS.

The protein belongs to the KCNMB (TC 8.A.14.1) family. KCNMB4 subfamily. Interacts with KCNMA1 tetramer. There are probably 4 molecules of KCMNB4 per KCNMA1 tetramer. Interacts with FMR1 (via N-terminus). In terms of processing, phosphorylated. Phosphorylation modulates its effect on KCNMA1 activation kinetics. Post-translationally, N-glycosylated. A highly glycosylated form is promoted by KCNMA1. Glycosylation, which is not required for the interaction with KCNMA1 and subcellular location, increases protection against charybdotoxin.

Its subcellular location is the membrane. In terms of biological role, regulatory subunit of the calcium activated potassium KCNMA1 (maxiK) channel. Modulates the calcium sensitivity and gating kinetics of KCNMA1, thereby contributing to KCNMA1 channel diversity. Decreases the gating kinetics and calcium sensitivity of the KCNMA1 channel, but with fast deactivation kinetics. May decrease KCNMA1 channel openings at low calcium concentrations but increases channel openings at high calcium concentrations. Makes KCNMA1 channel resistant to 100 nM charybdotoxin (CTX) toxin concentrations. This is Calcium-activated potassium channel subunit beta-4 (Kcnmb4) from Rattus norvegicus (Rat).